Consider the following 142-residue polypeptide: Large ribosomal subunit protein uL13 (142 aa).

The protein belongs to the universal ribosomal protein uL13 family. In terms of assembly, part of the 50S ribosomal subunit.

Its function is as follows. This protein is one of the early assembly proteins of the 50S ribosomal subunit, although it is not seen to bind rRNA by itself. It is important during the early stages of 50S assembly. The sequence is that of Large ribosomal subunit protein uL13 from Pseudomonas fluorescens (strain Pf0-1).